A 41-amino-acid chain; its full sequence is Disintegrin viperistatin (41 aa).

Disulfide bonds link Cys-1/Cys-10, Cys-6/Cys-29, Cys-7/Cys-34, and Cys-19/Cys-36. The 41-residue stretch at 1–41 (CTTGPCCRQCKLKPAGTTCWKTSRTSHYCTGKSCDCPVYQG) folds into the Disintegrin domain. The short motif at 21 to 23 (KTS) is the Cell attachment site; atypical (KTS) element.

As to quaternary structure, monomer. Expressed by the venom gland.

The protein localises to the secreted. Its function is as follows. Potent and highly selective inhibitor of alpha-1/beta-1 (ITGA1/ITGB1) integrin binding to collagen I and IV. Is about 25-fold more potent than obtustatin inhibiting the binding of this integrin to collagen IV. This is Disintegrin viperistatin from Daboia palaestinae (Palestine viper).